A 217-amino-acid polypeptide reads, in one-letter code: Orotidine 5'-phosphate decarboxylase (217 aa).

Substrate contacts are provided by residues Asp-14, Lys-36, 64-73 (DFKVADIPST), Ser-120, 172-182 (PGVGAQGGNLS), Gly-197, and Arg-198. Lys-66 serves as the catalytic Proton donor.

This sequence belongs to the OMP decarboxylase family. Type 1 subfamily. In terms of assembly, homodimer.

The catalysed reaction is orotidine 5'-phosphate + H(+) = UMP + CO2. Its pathway is pyrimidine metabolism; UMP biosynthesis via de novo pathway; UMP from orotate: step 2/2. Catalyzes the decarboxylation of orotidine 5'-monophosphate (OMP) to uridine 5'-monophosphate (UMP). This chain is Orotidine 5'-phosphate decarboxylase, found in Methanococcus maripaludis (strain DSM 14266 / JCM 13030 / NBRC 101832 / S2 / LL).